A 546-amino-acid polypeptide reads, in one-letter code: Casein kinase I homolog 2 (546 aa).

Polar residues-rich tracts occupy residues 1–33 (MSQV…SNVR) and 44–55 (HVSSNLNHNTGN). The disordered stretch occupies residues 1-67 (MSQVQSPLTA…ASYSGSQSRD (67 aa)). An N-acetylserine modification is found at serine 2. In terms of domain architecture, Protein kinase spans 76–360 (YKIGKKIGEG…ETADGQYDWM (285 aa)). Residues 82–90 (IGEGSFGVL) and lysine 105 each bind ATP. Residue aspartate 195 is the Proton acceptor of the active site. Disordered stretches follow at residues 373 to 425 (NKKP…QAQA) and 443 to 546 (QQAN…LGCC). The segment covering 412–425 (QQQQQQQAQAQAQA) has biased composition (low complexity). The span at 453–465 (DDSHYDEEREASK) shows a compositional bias: basic and acidic residues. Position 455 is a phosphoserine (serine 455). Lysine 465 participates in a covalent cross-link: Glycyl lysine isopeptide (Lys-Gly) (interchain with G-Cter in ubiquitin). The segment covering 475–496 (QQQTQQKYAQQQQKQMQQKSKQ) has biased composition (low complexity). The segment covering 497–530 (FANTGANGQTNKYPYNAQPTANDEQNAKNAAQDR) has biased composition (polar residues). Low complexity predominate over residues 533–546 (NKSSKGFFSKLGCC). Residues cysteine 545 and cysteine 546 are each lipidated (S-palmitoyl cysteine).

Belongs to the protein kinase superfamily. CK1 Ser/Thr protein kinase family. Casein kinase I subfamily. In terms of processing, palmitoylated by AKR1, which is required for proper plasma membrane localization of YCK2.

It localises to the cell membrane. It carries out the reaction L-seryl-[protein] + ATP = O-phospho-L-seryl-[protein] + ADP + H(+). The catalysed reaction is L-threonyl-[protein] + ATP = O-phospho-L-threonyl-[protein] + ADP + H(+). Casein kinases are operationally defined by their preferential utilization of acidic proteins such as caseins as substrates. In Saccharomyces cerevisiae (strain ATCC 204508 / S288c) (Baker's yeast), this protein is Casein kinase I homolog 2 (YCK2).